The sequence spans 232 residues: Ornithine carbamoyltransferase (232 aa).

Residues Gln15, Arg39, and 66–69 contribute to the carbamoyl phosphate site; that span reads HPTQ. L-ornithine-binding positions include Asn99, Asp163, and 167–168; that span reads SM. Carbamoyl phosphate-binding positions include 204–207 and Thr232; that span reads HCLP.

Belongs to the aspartate/ornithine carbamoyltransferase superfamily. OTCase family.

Its subcellular location is the cytoplasm. It carries out the reaction carbamoyl phosphate + L-ornithine = L-citrulline + phosphate + H(+). It functions in the pathway amino-acid biosynthesis; L-arginine biosynthesis; L-arginine from L-ornithine and carbamoyl phosphate: step 1/3. Reversibly catalyzes the transfer of the carbamoyl group from carbamoyl phosphate (CP) to the N(epsilon) atom of ornithine (ORN) to produce L-citrulline. The chain is Ornithine carbamoyltransferase (argF) from Neisseria subflava.